The following is a 1659-amino-acid chain: Vitellogenin (1659 aa).

The N-terminal stretch at 1-15 (MRAVVLALTLALVAS) is a signal peptide. In terms of domain architecture, Vitellogenin spans 24-662 (FAASKTYVYK…DAATLFPRTV (639 aa)). Residue asparagine 1089 is glycosylated (N-linked (GlcNAc...) asparagine). Composition is skewed to low complexity over residues 1090 to 1111 (GTRASSSSSSSSSSSSRSSSSR) and 1119 to 1129 (SSSSSSSSSSR). Positions 1090–1163 (GTRASSSSSS…SQSTSNVISR (74 aa)) are disordered. Residues 1389-1565 (VKCSMVRDTL…SWVLPSDSCR (177 aa)) enclose the VWFD domain. Cystine bridges form between cysteine 1391–cysteine 1528 and cysteine 1414–cysteine 1564. Asparagine 1627 carries N-linked (GlcNAc...) asparagine glycosylation.

Phosvitin, an egg yolk storage protein, is one of the most highly phosphorylated (10%) proteins in nature. Produced by the liver, secreted into the blood and then sequestered by receptor mediated endocytosis into growing oocytes, where it is generally cleaved, giving rise to the respective yolk components lipovitellin-I, phosvitin, lipovitellin-II.

In terms of biological role, precursor of the major egg-yolk proteins that are sources of nutrients during early development of oviparous organisms. This is Vitellogenin (vtg1) from Oncorhynchus mykiss (Rainbow trout).